We begin with the raw amino-acid sequence, 977 residues long: Serine/threonine-protein kinase/endoribonuclease IRE1 (977 aa).

The N-terminal stretch at 1–20 is a signal peptide; sequence MPARWLLLLLALLLPPPGPG. The Lumenal portion of the chain corresponds to 21–445; that stretch reads SFGRTSTVTL…EAPVDSMLKD (425 aa). Residue asparagine 178 is glycosylated (N-linked (GlcNAc...) asparagine). A helical membrane pass occupies residues 446-466; it reads MATIILSTFLLVGWVAFIITY. Residues 467–977 are Cytoplasmic-facing; that stretch reads PLSVHQQRQL…PQPPVIPYAL (511 aa). The disordered stretch occupies residues 498–559; that stretch reads FHPHGDLTQD…PSLEQDDEDE (62 aa). A compositionally biased stretch (low complexity) spans 513–551; that stretch reads SSGPFSESSGTSSPSPSPRASNHSLHPSSSASRAGTSPS. A Protein kinase domain is found at 571-832; sequence FCPKDVLGHG…AKHVLKHPFF (262 aa). Residues 577–585, lysine 599, and 643–645 contribute to the ATP site; these read LGHGAEGTI and ELC. The active-site Proton acceptor; for protein kinase activity is aspartate 688. ATP is bound by residues 690–693 and aspartate 711; that span reads KPHN. Residues serine 724 and serine 729 each carry the phosphoserine modification. A KEN domain is found at 835 to 963; the sequence is LEKQLQFFQD…ERLFQTYYWH (129 aa). An interacts with hydroxy-aryl-aldehyde inhibitors region spans residues 906-907; sequence NK.

Belongs to the protein kinase superfamily. Ser/Thr protein kinase family. In terms of assembly, monomer. Homodimer; disulfide-linked; homodimerization takes place in response to endoplasmic reticulum stress and promotes activation of the kinase and endoribonuclease activities. Dimer formation is driven by hydrophobic interactions within the N-terminal luminal domains and stabilized by disulfide bridges. Interacts (via the luminal region) with DNAJB9/ERdj4; interaction takes place in unstressed cells and promotes recruitment of HSPA5/BiP. Interacts (via the luminal region) with HSPA5/BiP; HSPA5/BiP is a negative regulator of the unfolded protein response (UPR) that prevents homodimerization of ERN1/IRE1 and subsequent activation of the protein. Interaction with HSPA5 also competitively inhibits ERN1 interaction with MANF. Interacts with PDIA6, a negative regulator of the UPR; the interaction is direct and disrupts homodimerization. Interacts with DAB2IP (via PH domain); the interaction occurs in a endoplasmic reticulum stress-induced dependent manner and is required for subsequent recruitment of TRAF2 to ERN1/IRE1. Interacts with TAOK3 and TRAF2. Interacts with RNF13. Interacts with LACC1. Interacts (when unphosphorylated) with DDRGK1; interaction is dependent on UFM1 and takes place in response to endoplasmic reticulum stress, regulating ERN1/IRE1-alpha stability. Interacts (via N-terminus) with P4HB/PDIA1; the interaction is enhanced by phosphorylation of P4HB by FAM20C in response to endoplasmic reticulum stress and results in attenuation of ERN1 activity. Interacts with TMBIM6; this interaction inhibits ERN1 activity. Interacts (via luminal domain) with MANF (via C-terminus); the interaction is decreased in the presence of increasing concentrations of Ca(2+). The cofactor is Mg(2+). Post-translationally, autophosphorylated following homodimerization. Autophosphorylation promotes activation of the endoribonuclease domain. In response to ER stress, phosphorylated at Ser-724, Ser-729 and possibly Ser-726; phosphorylation promotes oligomerization and endoribonuclease activity. Dephosphorylated at Ser-724, Ser-729 and possibly Ser-726 by RPAP2 to abort failed ER-stress adaptation and trigger apoptosis. Phosphorylated at Ser-724; in response to the ER stressor tunicamycin. ADP-ribosylated by PARP16 upon ER stress, which increases both kinase and endonuclease activities. Expressed in liver (at protein level). Ubiquitously expressed. High levels in thymus, liver and lung. In the brain, preferentially expressed in cortical, hippocampal and olfactory neurons.

The protein localises to the endoplasmic reticulum membrane. It catalyses the reaction L-seryl-[protein] + ATP = O-phospho-L-seryl-[protein] + ADP + H(+). The enzyme catalyses L-threonyl-[protein] + ATP = O-phospho-L-threonyl-[protein] + ADP + H(+). Its activity is regulated as follows. The kinase domain is activated by trans-autophosphorylation following homodimerization. Kinase activity is required for activation of the endoribonuclease domain. Endoribonuclease activity is specifically inhibited by hydroxy-aryl-aldehydes (HAA) MKC9989, OICR464 and OICR573. In terms of biological role, serine/threonine-protein kinase and endoribonuclease that acts as a key sensor for the endoplasmic reticulum unfolded protein response (UPR). In unstressed cells, the endoplasmic reticulum luminal domain is maintained in its inactive monomeric state by binding to the endoplasmic reticulum chaperone HSPA5/BiP. Accumulation of misfolded protein in the endoplasmic reticulum causes release of HSPA5/BiP, allowing the luminal domain to homodimerize, promoting autophosphorylation of the kinase domain and subsequent activation of the endoribonuclease activity. The endoribonuclease activity is specific for XBP1 mRNA and excises 26 nucleotides from XBP1 mRNA. The resulting spliced transcript of XBP1 encodes a transcriptional activator protein that up-regulates expression of UPR target genes. Acts as an upstream signal for ER stress-induced GORASP2-mediated unconventional (ER/Golgi-independent) trafficking of CFTR to cell membrane by modulating the expression and localization of SEC16A. The sequence is that of Serine/threonine-protein kinase/endoribonuclease IRE1 from Mus musculus (Mouse).